The sequence spans 141 residues: Hemoglobin subunit alpha (141 aa).

Positions 1-141 (VLSAKDKTNI…VSTVLTSKYR (141 aa)) constitute a Globin domain. Serine 3 carries the post-translational modification Phosphoserine. At lysine 7 the chain carries N6-succinyllysine. Threonine 8 is subject to Phosphothreonine. Lysine 16 bears the N6-acetyllysine; alternate mark. An N6-succinyllysine; alternate modification is found at lysine 16. Phosphotyrosine is present on tyrosine 24. An N6-succinyllysine modification is found at lysine 40. Residue serine 49 is modified to Phosphoserine. Histidine 58 contributes to the O2 binding site. A heme b-binding site is contributed by histidine 87. Position 102 is a phosphoserine (serine 102). A Phosphothreonine modification is found at threonine 108. Residues serine 124 and serine 131 each carry the phosphoserine modification. 2 positions are modified to phosphothreonine: threonine 134 and threonine 137. Phosphoserine is present on serine 138.

Belongs to the globin family. In terms of assembly, heterotetramer of two alpha chains and two beta chains. Red blood cells.

In terms of biological role, involved in oxygen transport from the lung to the various peripheral tissues. Its function is as follows. Hemopressin acts as an antagonist peptide of the cannabinoid receptor CNR1. Hemopressin-binding efficiently blocks cannabinoid receptor CNR1 and subsequent signaling. In Mesocricetus auratus (Golden hamster), this protein is Hemoglobin subunit alpha (HBA).